The following is a 177-amino-acid chain: uncharacterized protein (177 aa).

The segment at 122–177 is disordered; the sequence is LPFTRNGSGQQSNKLRDPKKGRTHKPKPSEKHKKNKTGKKGAQEKTHRSRSSRKGN. Basic residues-rich tracts occupy residues 142–160 and 168–177; these read GRTH…KTGK and HRSRSSRKGN.

This is an uncharacterized protein from Saccharomyces cerevisiae (strain ATCC 204508 / S288c) (Baker's yeast).